A 257-amino-acid chain; its full sequence is Hydroxyacylglutathione hydrolase (257 aa).

Residues His-54, His-56, Asp-58, His-59, His-110, Asp-131, and His-169 each coordinate Zn(2+).

It belongs to the metallo-beta-lactamase superfamily. Glyoxalase II family. In terms of assembly, monomer. It depends on Zn(2+) as a cofactor.

The catalysed reaction is an S-(2-hydroxyacyl)glutathione + H2O = a 2-hydroxy carboxylate + glutathione + H(+). It functions in the pathway secondary metabolite metabolism; methylglyoxal degradation; (R)-lactate from methylglyoxal: step 2/2. Functionally, thiolesterase that catalyzes the hydrolysis of S-D-lactoyl-glutathione to form glutathione and D-lactic acid. The polypeptide is Hydroxyacylglutathione hydrolase (Hahella chejuensis (strain KCTC 2396)).